Consider the following 88-residue polypeptide: Small ribosomal subunit protein bS20 (88 aa).

It belongs to the bacterial ribosomal protein bS20 family.

Functionally, binds directly to 16S ribosomal RNA. The chain is Small ribosomal subunit protein bS20 from Mycoplasmopsis synoviae (strain 53) (Mycoplasma synoviae).